The chain runs to 41 residues: Large ribosomal subunit protein bL36 (41 aa).

The protein belongs to the bacterial ribosomal protein bL36 family.

The chain is Large ribosomal subunit protein bL36 from Dinoroseobacter shibae (strain DSM 16493 / NCIMB 14021 / DFL 12).